A 258-amino-acid polypeptide reads, in one-letter code: MSLKDSAKIALSLMDLTTLNDNDTDEKVITLCQQGKTEFGTPAAVCVYPRFVPIARKALKAQGTEQVKIATVTNFPHGNDDIDIAVAETKAAVAYGADEVDVVFPYKALMAGNEQIGFELVQQCKAVCQASNVLLKVIIETGELKTAELIRKASEISIKAGADFIKTSTGKVPVNATLESARIMLETIRDLNVADRVGFKAAGGVKTAEEAAQYLALAQEILGHDWVNSDHFRFGASSLLTNLLAALNGQANQKVSGY.

The active-site Proton donor/acceptor is the aspartate 101. Lysine 166 (schiff-base intermediate with acetaldehyde) is an active-site residue. The active-site Proton donor/acceptor is the lysine 200.

It belongs to the DeoC/FbaB aldolase family. DeoC type 2 subfamily.

Its subcellular location is the cytoplasm. It carries out the reaction 2-deoxy-D-ribose 5-phosphate = D-glyceraldehyde 3-phosphate + acetaldehyde. Its pathway is carbohydrate degradation; 2-deoxy-D-ribose 1-phosphate degradation; D-glyceraldehyde 3-phosphate and acetaldehyde from 2-deoxy-alpha-D-ribose 1-phosphate: step 2/2. In terms of biological role, catalyzes a reversible aldol reaction between acetaldehyde and D-glyceraldehyde 3-phosphate to generate 2-deoxy-D-ribose 5-phosphate. This chain is Deoxyribose-phosphate aldolase, found in Actinobacillus pleuropneumoniae serotype 7 (strain AP76).